The following is a 155-amino-acid chain: Small ribosomal subunit protein uS7 (155 aa).

It belongs to the universal ribosomal protein uS7 family. In terms of assembly, part of the 30S ribosomal subunit. Contacts proteins S9 and S11.

Its function is as follows. One of the primary rRNA binding proteins, it binds directly to 16S rRNA where it nucleates assembly of the head domain of the 30S subunit. Is located at the subunit interface close to the decoding center, probably blocks exit of the E-site tRNA. The chain is Small ribosomal subunit protein uS7 from Corynebacterium aurimucosum (strain ATCC 700975 / DSM 44827 / CIP 107346 / CN-1) (Corynebacterium nigricans).